Reading from the N-terminus, the 255-residue chain is Adenosylcobinamide-GDP ribazoletransferase (255 aa).

The next 6 membrane-spanning stretches (helical) occupy residues leucine 24 to valine 44, alanine 45 to valine 65, valine 98 to serine 118, leucine 122 to isoleucine 142, lysine 164 to serine 184, and serine 187 to isoleucine 207.

Belongs to the CobS family. Mg(2+) serves as cofactor.

The protein resides in the cell membrane. It catalyses the reaction alpha-ribazole + adenosylcob(III)inamide-GDP = adenosylcob(III)alamin + GMP + H(+). The enzyme catalyses alpha-ribazole 5'-phosphate + adenosylcob(III)inamide-GDP = adenosylcob(III)alamin 5'-phosphate + GMP + H(+). It participates in cofactor biosynthesis; adenosylcobalamin biosynthesis; adenosylcobalamin from cob(II)yrinate a,c-diamide: step 7/7. Joins adenosylcobinamide-GDP and alpha-ribazole to generate adenosylcobalamin (Ado-cobalamin). Also synthesizes adenosylcobalamin 5'-phosphate from adenosylcobinamide-GDP and alpha-ribazole 5'-phosphate. The sequence is that of Adenosylcobinamide-GDP ribazoletransferase from Thermoplasma acidophilum (strain ATCC 25905 / DSM 1728 / JCM 9062 / NBRC 15155 / AMRC-C165).